Here is a 569-residue protein sequence, read N- to C-terminus: Urease subunit beta (569 aa).

The 439-residue stretch at 131–569 (GGIDTHIHFI…VSLAQLFSIF (439 aa)) folds into the Urease domain. The Ni(2+) site is built by His136, His138, and Lys219. The residue at position 219 (Lys219) is an N6-carboxylysine. Substrate is bound at residue His221. Positions 248 and 274 each coordinate Ni(2+). His322 functions as the Proton donor in the catalytic mechanism. Asp362 lines the Ni(2+) pocket.

This sequence belongs to the metallo-dependent hydrolases superfamily. Urease alpha subunit family. As to quaternary structure, heterohexamer of 3 UreA (alpha) and 3 UreB (beta) subunits. The cofactor is Ni cation. Carboxylation allows a single lysine to coordinate two nickel ions.

Its subcellular location is the cytoplasm. It catalyses the reaction urea + 2 H2O + H(+) = hydrogencarbonate + 2 NH4(+). It participates in nitrogen metabolism; urea degradation; CO(2) and NH(3) from urea (urease route): step 1/1. This is Urease subunit beta from Helicobacter pylori (strain HPAG1).